The chain runs to 29 residues: Cytochrome b6-f complex subunit 8 (29 aa).

Residues 3-23 traverse the membrane as a helical segment; that stretch reads LITITWASVMVAFTFSLSLVV.

It belongs to the PetN family. As to quaternary structure, the 4 large subunits of the cytochrome b6-f complex are cytochrome b6, subunit IV (17 kDa polypeptide, PetD), cytochrome f and the Rieske protein, while the 4 small subunits are PetG, PetL, PetM and PetN. The complex functions as a dimer.

It localises to the plastid. The protein resides in the chloroplast thylakoid membrane. Component of the cytochrome b6-f complex, which mediates electron transfer between photosystem II (PSII) and photosystem I (PSI), cyclic electron flow around PSI, and state transitions. This is Cytochrome b6-f complex subunit 8 from Chaetosphaeridium globosum (Charophycean green alga).